Consider the following 298-residue polypeptide: Inosose dehydratase (298 aa).

The protein belongs to the IolE/MocC family. It depends on glutathione as a cofactor. The cofactor is Co(2+). Requires Mn(2+) as cofactor.

It carries out the reaction scyllo-inosose = 3D-3,5/4-trihydroxycyclohexane-1,2-dione + H2O. It functions in the pathway polyol metabolism; myo-inositol degradation into acetyl-CoA; acetyl-CoA from myo-inositol: step 2/7. Catalyzes the dehydration of inosose (2-keto-myo-inositol, 2KMI or 2,4,6/3,5-pentahydroxycyclohexanone) to 3D-(3,5/4)-trihydroxycyclohexane-1,2-dione (D-2,3-diketo-4-deoxy-epi-inositol). This chain is Inosose dehydratase, found in Lacticaseibacillus casei (Lactobacillus casei).